The primary structure comprises 190 residues: Large ribosomal subunit protein uL5 (190 aa).

This sequence belongs to the universal ribosomal protein uL5 family. Part of the 50S ribosomal subunit; contacts the 5S rRNA and probably tRNA. Forms a bridge to the 30S subunit in the 70S ribosome.

In terms of biological role, this is one of the proteins that bind and probably mediate the attachment of the 5S RNA into the large ribosomal subunit, where it forms part of the central protuberance. In the 70S ribosome it contacts protein S13 of the 30S subunit (bridge B1b), connecting the 2 subunits; this bridge is implicated in subunit movement. May contact the P site tRNA; the 5S rRNA and some of its associated proteins might help stabilize positioning of ribosome-bound tRNAs. The polypeptide is Large ribosomal subunit protein uL5 (Methanocaldococcus jannaschii (strain ATCC 43067 / DSM 2661 / JAL-1 / JCM 10045 / NBRC 100440) (Methanococcus jannaschii)).